The primary structure comprises 234 residues: Demethylmenaquinone methyltransferase (234 aa).

S-adenosyl-L-methionine-binding positions include Thr-62, Asp-80, 100-101 (DA), and Ser-117.

It belongs to the class I-like SAM-binding methyltransferase superfamily. MenG/UbiE family.

The enzyme catalyses a 2-demethylmenaquinol + S-adenosyl-L-methionine = a menaquinol + S-adenosyl-L-homocysteine + H(+). It participates in quinol/quinone metabolism; menaquinone biosynthesis; menaquinol from 1,4-dihydroxy-2-naphthoate: step 2/2. Its function is as follows. Methyltransferase required for the conversion of demethylmenaquinol (DMKH2) to menaquinol (MKH2). The sequence is that of Demethylmenaquinone methyltransferase from Mycobacterium bovis (strain ATCC BAA-935 / AF2122/97).